An 878-amino-acid chain; its full sequence is Glycogen [starch] synthase (878 aa).

K61 contacts UDP-alpha-D-glucose. Disordered regions lie at residues 637–721 and 746–878; these read PPKP…NVIP and NEFK…KSLK. 2 stretches are compositionally biased toward low complexity: residues 641 to 656 and 666 to 676; these read ISRS…LKLS and QQQQQQQQPQP. A compositionally biased stretch (polar residues) spans 677–692; sequence IGTTINLIPPSSNVSV. Composition is skewed to low complexity over residues 693–715, 746–781, 795–830, and 838–878; these read TPTT…ITTP, NEFK…AAAT, PNTS…NGKP, and TKSN…KSLK.

Belongs to the glycosyltransferase 3 family.

It carries out the reaction [(1-&gt;4)-alpha-D-glucosyl](n) + UDP-alpha-D-glucose = [(1-&gt;4)-alpha-D-glucosyl](n+1) + UDP + H(+). The protein operates within glycan biosynthesis; glycogen biosynthesis. Its function is as follows. Catalyzes the formation of apha-1,4 glycosidic bonds adding glucose residue from UDPG to the growing chain of glycogen. The chain is Glycogen [starch] synthase (glcS) from Dictyostelium discoideum (Social amoeba).